The chain runs to 490 residues: ATP synthase subunit beta, chloroplastic (490 aa).

169–176 (GGAGVGKT) is an ATP binding site.

This sequence belongs to the ATPase alpha/beta chains family. F-type ATPases have 2 components, CF(1) - the catalytic core - and CF(0) - the membrane proton channel. CF(1) has five subunits: alpha(3), beta(3), gamma(1), delta(1), epsilon(1). CF(0) has four main subunits: a(1), b(1), b'(1) and c(9-12).

The protein localises to the plastid. Its subcellular location is the chloroplast thylakoid membrane. It carries out the reaction ATP + H2O + 4 H(+)(in) = ADP + phosphate + 5 H(+)(out). Functionally, produces ATP from ADP in the presence of a proton gradient across the membrane. The catalytic sites are hosted primarily by the beta subunits. The sequence is that of ATP synthase subunit beta, chloroplastic from Cyanidium caldarium (Red alga).